The following is a 1033-amino-acid chain: Isoleucine--tRNA ligase 2 (1033 aa).

Residues 47–57 (PTANGLPHVGH) carry the 'HIGH' region motif. The short motif at 590 to 594 (KMSKS) is the 'KMSKS' region element. Lys593 serves as a coordination point for ATP.

The protein belongs to the class-I aminoacyl-tRNA synthetase family. IleS type 2 subfamily. Monomer. Zn(2+) serves as cofactor.

It is found in the cytoplasm. The catalysed reaction is tRNA(Ile) + L-isoleucine + ATP = L-isoleucyl-tRNA(Ile) + AMP + diphosphate. Functionally, catalyzes the attachment of isoleucine to tRNA(Ile). As IleRS can inadvertently accommodate and process structurally similar amino acids such as valine, to avoid such errors it has two additional distinct tRNA(Ile)-dependent editing activities. One activity is designated as 'pretransfer' editing and involves the hydrolysis of activated Val-AMP. The other activity is designated 'posttransfer' editing and involves deacylation of mischarged Val-tRNA(Ile). This is Isoleucine--tRNA ligase 2 from Bacillus anthracis.